Reading from the N-terminus, the 263-residue chain is Elongin-A (263 aa).

Disordered stretches follow at residues 112 to 147 and 170 to 263; these read KLEQSKQNKRIVPLEREPRAARPPKRPRPMSNYCPK and SATS…PKRI. Polar residues-rich tracts occupy residues 186–206 and 214–229; these read RSSSNATNTSTKRPLTSNTYP and SFTSQNFKSFNAVKTQ. A compositionally biased stretch (low complexity) spans 230–245; sequence PSSSSSPSISRPTSFP. Polar residues predominate over residues 253–263; the sequence is SRFSSQVPKRI.

Belongs to the ELA1 family. In terms of assembly, heterodimer with elc1. Component of a CRL3 E3 ubiquitin ligase complex consisting of a cullin, the linker protein elc1, the substrate receptor pof4/ela1, and the RING protein rbx1. Interacts with skp1.

Functionally, as part of the CRL3 E3 ubiquitin ligase complex; polyubiquitylates monoubiquitylated RNA polymerase II subunit rpb1 to trigger its proteolysis; plays a role in global genomic repair. This chain is Elongin-A (pof4), found in Schizosaccharomyces pombe (strain 972 / ATCC 24843) (Fission yeast).